A 212-amino-acid polypeptide reads, in one-letter code: MAHDMYPQPRPLLTPDLMIRAYAAGIFPMSEGADNPEVFWVDPQRRGVFPLNGFHISRTLRRQIRFGGYSVHINRDFAGVLDGCADREPTWINADLTACYLALHAQGLAHSVEIWDDEGLAGAVFGVTLGAAFFGESMFSRRTGGSKLALAHLIHRLRAGGFTLFDTQFVTDHLMSLGAFELPRSDYRAELSHALQLPADFMSLPEDVPLVV.

Belongs to the L/F-transferase family.

It is found in the cytoplasm. It catalyses the reaction N-terminal L-lysyl-[protein] + L-leucyl-tRNA(Leu) = N-terminal L-leucyl-L-lysyl-[protein] + tRNA(Leu) + H(+). The catalysed reaction is N-terminal L-arginyl-[protein] + L-leucyl-tRNA(Leu) = N-terminal L-leucyl-L-arginyl-[protein] + tRNA(Leu) + H(+). The enzyme catalyses L-phenylalanyl-tRNA(Phe) + an N-terminal L-alpha-aminoacyl-[protein] = an N-terminal L-phenylalanyl-L-alpha-aminoacyl-[protein] + tRNA(Phe). Its function is as follows. Functions in the N-end rule pathway of protein degradation where it conjugates Leu, Phe and, less efficiently, Met from aminoacyl-tRNAs to the N-termini of proteins containing an N-terminal arginine or lysine. The sequence is that of Leucyl/phenylalanyl-tRNA--protein transferase from Jannaschia sp. (strain CCS1).